The primary structure comprises 604 residues: Baculoviral IAP repeat-containing protein 3 (604 aa).

The BIR 1 repeat unit spans residues 29 to 96; that stretch reads ELYRMSTYST…RNLYPSCSFI (68 aa). An Omega-N-methylarginine modification is found at arginine 130. Serine 140 is modified (phosphoserine). 2 BIR repeats span residues 169–235 and 255–322; these read EEDR…CPFV and LAAR…CEYL. Cysteine 292, cysteine 295, histidine 312, and cysteine 319 together coordinate Zn(2+). A CARD domain is found at 439–529; sequence RESDDVSLIR…MLYKRFFVQQ (91 aa). Residues 557 to 592 form an RING-type zinc finger; the sequence is CKVCMDKEVSIVFIPCGHLVVCRDCAPSLRKCPICR.

This sequence belongs to the IAP family. In terms of assembly, interacts with PRSS25; the interaction inhibits apoptotic suppressor activity. The BIR motifs region interacts with TNF receptor associated factors 1 and 2 (TRAF1 and TRAF2) to form a heteromeric complex, which is then recruited to the tumor necrosis factor receptor 2 (TNFR2). Interaction with TRAF2 is required for ubiquitination of IKBKE, degradation of NFKBIA and activation of NF-kappa-B. Interacts with RIP1, RIP2, RIP3, RIP4 and USP19. Post-translationally, auto-ubiquitinated and degraded by the proteasome in apoptotic cells.

The protein localises to the cytoplasm. It is found in the nucleus. It carries out the reaction S-ubiquitinyl-[E2 ubiquitin-conjugating enzyme]-L-cysteine + [acceptor protein]-L-lysine = [E2 ubiquitin-conjugating enzyme]-L-cysteine + N(6)-ubiquitinyl-[acceptor protein]-L-lysine.. Its activity is regulated as follows. USP19 regulates the stability of BIRC3/c-IAP2 by preventing its ubiquitination. Multi-functional protein which regulates not only caspases and apoptosis, but also modulates inflammatory signaling and immunity, mitogenic kinase signaling and cell proliferation, as well as cell invasion and metastasis. Acts as an E3 ubiquitin-protein ligase regulating NF-kappa-B signaling and regulates both canonical and non-canonical NF-kappa-B signaling by acting in opposite directions: acts as a positive regulator of the canonical pathway and suppresses constitutive activation of non-canonical NF-kappa-B signaling. The target proteins for its E3 ubiquitin-protein ligase activity include: RIPK1, RIPK2, RIPK3, RIPK4, CASP3, CASP7, CASP8, IKBKE, TRAF1, and BCL10. Acts as an important regulator of innate immune signaling via regulation of Toll-like receptors (TLRs), Nodlike receptors (NLRs) and RIG-I like receptors (RLRs), collectively referred to as pattern recognition receptors (PRRs). Protects cells from spontaneous formation of the ripoptosome, a large multi-protein complex that has the capability to kill cancer cells in a caspase-dependent and caspase-independent manner. Suppresses ripoptosome formation by ubiquitinating RIPK1 and CASP8. The chain is Baculoviral IAP repeat-containing protein 3 (BIRC3) from Canis lupus familiaris (Dog).